A 186-amino-acid polypeptide reads, in one-letter code: Trafficking protein particle complex subunit 3 (186 aa).

Belongs to the TRAPP small subunits family. BET3 subfamily. Homodimer. Part of the multisubunit TRAPP (transport protein particle) complex.

It localises to the golgi apparatus. Its subcellular location is the cis-Golgi network. The protein localises to the endoplasmic reticulum. Its function is as follows. May play a role in vesicular transport from endoplasmic reticulum to Golgi. This is Trafficking protein particle complex subunit 3 (trappc3) from Dictyostelium discoideum (Social amoeba).